Here is a 73-residue protein sequence, read N- to C-terminus: MKRLQIYIDEDVDRALAVEARRRRTSKAALIREYVAEHLRQPGPDPVDAFVGSFVGEADLSASVDDVVYGKHE.

In terms of biological role, antitoxin component of a type II toxin-antitoxin (TA) system. Upon expression in E.coli neutralizes the toxic effect of cognate toxin VapC20. This chain is Antitoxin VapB20 (vapB20), found in Mycobacterium tuberculosis (strain ATCC 25618 / H37Rv).